The primary structure comprises 429 residues: Probable proton-coupled zinc antiporter SLC30A4 (429 aa).

The Cytoplasmic segment spans residues methionine 1 to arginine 113. Residues leucine 114–isoleucine 134 traverse the membrane as a helical segment. The Lumenal segment spans residues alanine 135 to aspartate 143. Residues alanine 144–serine 164 form a helical membrane-spanning segment. The Zn(2+) site is built by histidine 146 and aspartate 150. Over serine 165–arginine 178 the chain is Cytoplasmic. The helical transmembrane segment at leucine 179–leucine 199 threads the bilayer. The Lumenal portion of the chain corresponds to tyrosine 200–aspartate 216. The helical transmembrane segment at isoleucine 217 to asparagine 237 threads the bilayer. The Cytoplasmic portion of the chain corresponds to glutamine 238–alanine 274. The tract at residues glycine 240–glutamine 264 is zinc binding. The chain crosses the membrane as a helical span at residues phenylalanine 275–isoleucine 295. Zn(2+) contacts are provided by histidine 277 and aspartate 281. Topologically, residues arginine 296–tyrosine 310 are lumenal. Residues valine 311 to isoleucine 331 form a helical membrane-spanning segment. The Cytoplasmic portion of the chain corresponds to leucine 332–serine 429.

The protein belongs to the cation diffusion facilitator (CDF) transporter (TC 2.A.4) family. SLC30A subfamily. In terms of assembly, homodimerization could regulate efficiency for zinc transport. Interacts with TMEM163.

The protein localises to the endosome membrane. It is found in the late endosome membrane. Its subcellular location is the lysosome membrane. It catalyses the reaction Zn(2+)(in) + 2 H(+)(out) = Zn(2+)(out) + 2 H(+)(in). Functionally, probable proton-coupled zinc ion antiporter mediating zinc import from cytoplasm potentially into the endocytic compartment. Controls zinc deposition in milk. This Bos taurus (Bovine) protein is Probable proton-coupled zinc antiporter SLC30A4.